The sequence spans 249 residues: tRNA uridine(34) hydroxylase (249 aa).

The 95-residue stretch at 124-218 (TKQDVIVIDT…YLEDTQNKNN (95 aa)) folds into the Rhodanese domain. C178 serves as the catalytic Cysteine persulfide intermediate.

It belongs to the TrhO family.

It catalyses the reaction uridine(34) in tRNA + AH2 + O2 = 5-hydroxyuridine(34) in tRNA + A + H2O. Its function is as follows. Catalyzes oxygen-dependent 5-hydroxyuridine (ho5U) modification at position 34 in tRNAs. The polypeptide is tRNA uridine(34) hydroxylase (Rickettsia canadensis (strain McKiel)).